Consider the following 392-residue polypeptide: FK506-binding protein 4 (392 aa).

2 disordered regions span residues 58–116 and 161–284; these read NPEL…NEID and GNYV…PKTK. Acidic residues-rich tracts occupy residues 73–86, 104–116, and 172–219; these read DGLEEDESESEQEA, SESEDSEDENEID, and SDSD…DASD. 2 positions are modified to phosphoserine: Ser-80 and Ser-82. Composition is skewed to basic and acidic residues over residues 220 to 234 and 252 to 279; these read IESRLDELVKKDEKK and SAKPAEKKQTTKKDKKAEKVKDSEESKP. Positions 306–392 constitute a PPIase FKBP-type domain; the sequence is GTRVGMRYVG…TFDVKLVSMK (87 aa).

Belongs to the FKBP-type PPIase family. FKBP3/4 subfamily. In terms of assembly, binds to histones H3 and H4. Interacts with NOP53.

It is found in the nucleus. It carries out the reaction [protein]-peptidylproline (omega=180) = [protein]-peptidylproline (omega=0). PPIase that acts as a histone chaperone. Histone proline isomerase that increases the rate of cis-trans isomerization at 'Pro-17' (H3P16), 'Pro-31' (H3P30) and 'Pro-39 (H3P38) on the histone H3 N-terminal tail. H3P16 and H3P30 are the major proline targets with little activity shown against H3P38. H3P38 isomerization influences SET2-mediated H3K36 methylation thereby regulating gene expression. The chain is FK506-binding protein 4 from Saccharomyces cerevisiae (strain ATCC 204508 / S288c) (Baker's yeast).